Consider the following 264-residue polypeptide: uncharacterized protein (264 aa).

An N-terminal signal peptide occupies residues 1–16; the sequence is MKGKSALTLLLAGIFS. Cys17 is lipidated: N-palmitoyl cysteine. The S-diacylglycerol cysteine moiety is linked to residue Cys17.

Its subcellular location is the cell inner membrane. This is an uncharacterized protein from Escherichia coli (strain K12).